The primary structure comprises 682 residues: E3 ubiquitin-protein ligase RNF103 (682 aa).

The next 4 membrane-spanning stretches (helical) occupy residues 6–26 (FFLL…EAIV), 326–346 (LFVL…FITQ), 366–386 (LLII…LDSF), and 411–431 (MFYS…GLLI). Over residues 525-542 (EEMSESSQDTENDSDSDN) the composition is skewed to acidic residues. The interval 525–549 (EEMSESSQDTENDSDSDNTDTFSSS) is disordered. The RING-type zinc-finger motif lies at 618–660 (CVVCLENFENGCLLMGLPCGHVFHQNCIVMWLAGGRHCCPVCR).

Interacts with DERL1 and VCP. In terms of tissue distribution, expressed in different tissues including hippocampus, cerebral cortex, heart, kidney, spleen and lung. Expression is increased in hippocampus and frontal cortex after chronic treatment with antidepressants.

Its subcellular location is the endoplasmic reticulum membrane. The catalysed reaction is S-ubiquitinyl-[E2 ubiquitin-conjugating enzyme]-L-cysteine + [acceptor protein]-L-lysine = [E2 ubiquitin-conjugating enzyme]-L-cysteine + N(6)-ubiquitinyl-[acceptor protein]-L-lysine.. The protein operates within protein modification; protein ubiquitination. Functionally, acts as an E2-dependent E3 ubiquitin-protein ligase, probably involved in the ER-associated protein degradation pathway. This is E3 ubiquitin-protein ligase RNF103 (Rnf103) from Rattus norvegicus (Rat).